We begin with the raw amino-acid sequence, 276 residues long: HTH-type transcriptional activator RhaR (276 aa).

One can recognise an HTH araC/xylS-type domain in the interval 174–272 (ESLFSALNQS…SCTPTEYRSR (99 aa)). 2 consecutive DNA-binding regions (H-T-H motif) follow at residues 191-212 (ADFCRQHQLAVSSVRRIFKQQT) and 239-262 (VANIAIRCGYSDSNYFSSVFGKTF).

As to quaternary structure, binds DNA as a dimer.

It localises to the cytoplasm. Activates expression of the rhaSR operon in response to L-rhamnose. The sequence is that of HTH-type transcriptional activator RhaR from Mannheimia succiniciproducens (strain KCTC 0769BP / MBEL55E).